We begin with the raw amino-acid sequence, 474 residues long: Probable cytosol aminopeptidase (474 aa).

Positions 237 and 242 each coordinate Mn(2+). Residue Lys249 is part of the active site. Residues Asp260, Asp319, and Glu321 each contribute to the Mn(2+) site. Arg323 is a catalytic residue.

Belongs to the peptidase M17 family. Mn(2+) serves as cofactor.

The protein resides in the cytoplasm. It carries out the reaction Release of an N-terminal amino acid, Xaa-|-Yaa-, in which Xaa is preferably Leu, but may be other amino acids including Pro although not Arg or Lys, and Yaa may be Pro. Amino acid amides and methyl esters are also readily hydrolyzed, but rates on arylamides are exceedingly low.. The catalysed reaction is Release of an N-terminal amino acid, preferentially leucine, but not glutamic or aspartic acids.. Presumably involved in the processing and regular turnover of intracellular proteins. Catalyzes the removal of unsubstituted N-terminal amino acids from various peptides. This chain is Probable cytosol aminopeptidase, found in Helicobacter hepaticus (strain ATCC 51449 / 3B1).